A 132-amino-acid polypeptide reads, in one-letter code: C-glycoside deglycosidase beta subunit (132 aa).

This sequence belongs to the C-glycoside deglycosidase beta subunit family. In terms of assembly, heterodimer composed of an alpha subunit (CarB2) and a beta subunit (CarC2). It depends on a divalent metal cation as a cofactor.

The catalysed reaction is 3''-dehydroorientin = 1,5-anhydro-D-erythro-hex-1-en-3-ulose + luteolin. With respect to regulation, activity is strongly reduced in the presence of chelating agents. Functionally, carbon-carbon bond-cleaving enzyme which participates in the metabolism of C-glycosides. Acts on the C8-glycosylated compound 3''-dehydroorientin (3''-oxo-orientin). This Arthrobacter globiformis (strain ATCC 8010 / DSM 20124 / JCM 1332 / NBRC 12137 / NCIMB 8907 / NRRL B-2979 / 168) protein is C-glycoside deglycosidase beta subunit.